Consider the following 853-residue polypeptide: MKAEQKHTPMMQQYLKLKAENPEILLFYRMGDFYELFYDDAKRASQLLDISLTKRGSSAGEPIPMAGVPFHAVEGYLAKLVQLGESVAICEQIGDPATSKGPVERKVVRIVTPGTVTDEALLSERLDNLIAAIYHHNGKFGYATLDVTSGRFQLTEPETEEAMMAELQRTAPRELLFPEDFEPVHLMSNRNGNRRRPVWEFELDTAKQQLNQQFGTRDLVGFGVEHASLGLCAAGCLIQYVKDTQRTALPHIRSLTFDRQDHSVILDAATRRNLEITQNLAGGTDNTLAAVLDHCSTPMGSRMLKRWLHQPMRCIDTLNNRLDAIGEIKDQGLFTDLQPTLKQIGDIERILARLALRSARPRDMARLRHAMQQLPELESLTASLTHPYLVKLAQYAAPIDEVCELLERAIKENPPVVIRDGGVIAEGYNEELDEWRKLADGATEYLEKLEADERERHGIDTLKVGYNAVHGFFIQVSRGQSHLVPPHYVRRQTLKNAERYIIPELKEHEDKVLNSKSKALALEKKLWEELFDLLMPHLEQMQNLASAVSQMDVLQNLAERADSLDYCRPTLVKDAGIHIQAGRHPVVEQVTSDPFIANPIELSPSRKMLIITGPNMGGKSTYMRQTALIALMAHIGSYVPAESAQIGSLDRIFTRIGASDDLASGRSTFMVEMTETANILHNATKNSLVLMDEIGRGTSTYDGLSLAWASAEWLATQIGAMTLFATHYFELTELPNLLPNLANVHLDAVEHGDSIAFMHAVQEGAASKSYGLAVAGLAGVPKTVIKNARTKLSQLEQLGQASDSPRPSTVDVANQLSLIPEPSEIEQALSNIDPDDLTPRQALEELYRLKKML.

Residue 613 to 620 (GPNMGGKS) participates in ATP binding.

Belongs to the DNA mismatch repair MutS family.

Its function is as follows. This protein is involved in the repair of mismatches in DNA. It is possible that it carries out the mismatch recognition step. This protein has a weak ATPase activity. The sequence is that of DNA mismatch repair protein MutS from Vibrio parahaemolyticus serotype O3:K6 (strain RIMD 2210633).